We begin with the raw amino-acid sequence, 1328 residues long: Tubulin polyglutamylase TTLL5 (1328 aa).

The disordered stretch occupies residues 1–22 (MPVVMARDLEETASSSEDEDLA). Positions 62–407 (RYHLSYKIVR…VCQDPAQRTS (346 aa)) constitute a TTL domain. ATP is bound by residues K180, 186–187 (RG), 208–211 (SRYI), and 221–223 (KFD). R186 is a binding site for a protein. R247 contacts L-glutamate. Position 268-269 (268-269 (TN)) interacts with ATP. L-glutamate-binding residues include Y270, S271, and K293. 3 residues coordinate Mg(2+): D353, E366, and N368. A c-MTBD region region spans residues 378-488 (PLDLKIKASM…RGGFIRIFPT (111 aa)). K384 is an L-glutamate binding site. Disordered regions lie at residues 411–436 (IYPS…SASD), 585–631 (AQPA…QAKY), 834–853 (HSKS…KGDH), 948–975 (PALL…PAGL), 1006–1032 (SSAK…EGED), 1085–1129 (RSSA…LQTG), and 1212–1271 (RISS…QLNG). Polar residues predominate over residues 420-432 (RNPFQKPQRTRPL). A compositionally biased stretch (acidic residues) spans 597–617 (ESEEEEEVGLDNDDEEQEASQ). The segment covering 838–847 (SKNSSSYSDS) has biased composition (low complexity). Polar residues-rich tracts occupy residues 1116-1128 (THSS…SLQT), 1214-1227 (SSAT…NTLP), 1234-1248 (PNSS…SNHK), and 1257-1271 (QRAS…QLNG).

The protein belongs to the tubulin--tyrosine ligase family. As to quaternary structure, interacts with the transcriptional coactivators NCOA1/SRC-1 and NCOA2/TIF2. Mg(2+) is required as a cofactor. As to expression, highly expressed in brain, kidney, liver, spleen and testis. Expressed in heart, lung, muscle and trachea.

The protein localises to the cell projection. It is found in the cilium. It localises to the cytoplasm. The protein resides in the cytoskeleton. Its subcellular location is the cilium basal body. The protein localises to the nucleus. The catalysed reaction is L-glutamyl-[protein] + L-glutamate + ATP = gamma-L-glutamyl-L-glutamyl-[protein] + ADP + phosphate + H(+). It carries out the reaction (L-glutamyl)(n)-gamma-L-glutamyl-L-glutamyl-[protein] + L-glutamate + ATP = (L-glutamyl)(n+1)-gamma-L-glutamyl-L-glutamyl-[protein] + ADP + phosphate + H(+). In terms of biological role, polyglutamylase which modifies tubulin, generating polyglutamate side chains on the gamma-carboxyl group of specific glutamate residues within the C-terminal tail of tubulin. Preferentially mediates ATP-dependent initiation step of the polyglutamylation reaction over the elongation step. Preferentially modifies the alpha-tubulin tail over a beta-tail. Required for CCSAP localization to both polyglutamylated spindle and cilia microtubules. Increases the effects of transcriptional coactivator NCOA2/TIF2 in glucocorticoid receptor-mediated repression and induction and in androgen receptor-mediated induction. The sequence is that of Tubulin polyglutamylase TTLL5 from Mus musculus (Mouse).